The following is a 131-amino-acid chain: Glycine cleavage system H protein (131 aa).

The Lipoyl-binding domain occupies 24–106 (RVTVGISDHA…YGEGWIFVVE (83 aa)). Lys-65 bears the N6-lipoyllysine mark.

The protein belongs to the GcvH family. The glycine cleavage system is composed of four proteins: P, T, L and H. The cofactor is (R)-lipoate.

Its function is as follows. The glycine cleavage system catalyzes the degradation of glycine. The H protein shuttles the methylamine group of glycine from the P protein to the T protein. The sequence is that of Glycine cleavage system H protein from Xanthomonas axonopodis pv. citri (strain 306).